Reading from the N-terminus, the 308-residue chain is Eukaryotic translation initiation factor 3 subunit G-A (308 aa).

2 disordered regions span residues 1–35 (MPTG…KPDP) and 177–226 (TGDK…ADDN). The segment covering 185 to 194 (GAEPEPAQAP) has biased composition (low complexity). A compositionally biased stretch (basic and acidic residues) spans 209 to 226 (GGSRRGESMQPNRRADDN). Residues 227-305 (ATIRVTNLSE…LILNVEWAKP (79 aa)) enclose the RRM domain.

It belongs to the eIF-3 subunit G family. In terms of assembly, component of the eukaryotic translation initiation factor 3 (eIF-3) complex, which is composed of 13 subunits: eif3a, eif3b, eif3c, eif3d, eif3e, eif3f, eif3g, eif3h, eif3i, eif3j, eif3k, eif3l and eif3m.

It localises to the cytoplasm. Its function is as follows. RNA-binding component of the eukaryotic translation initiation factor 3 (eIF-3) complex, which is involved in protein synthesis of a specialized repertoire of mRNAs and, together with other initiation factors, stimulates binding of mRNA and methionyl-tRNAi to the 40S ribosome. The eIF-3 complex specifically targets and initiates translation of a subset of mRNAs involved in cell proliferation. This subunit can bind 18S rRNA. The polypeptide is Eukaryotic translation initiation factor 3 subunit G-A (eif3g-a) (Xenopus laevis (African clawed frog)).